The sequence spans 374 residues: DNA replication and repair protein RecF (374 aa).

An ATP-binding site is contributed by 30-37 (GPNAQGKS).

The protein belongs to the RecF family.

It localises to the cytoplasm. The RecF protein is involved in DNA metabolism; it is required for DNA replication and normal SOS inducibility. RecF binds preferentially to single-stranded, linear DNA. It also seems to bind ATP. This chain is DNA replication and repair protein RecF, found in Acaryochloris marina (strain MBIC 11017).